The sequence spans 408 residues: MSPCENDTPINWKRNLIVAWLGCFLTGAAFSLVMPFLPLYVEQLGVTGHSALNMWSGIVFSITFLFSAIASPFWGGLADRKGRKLMLLRSALGMGIVMVLMGLAQNIWQFLILRALLGLLGGFVPNANALIATQVPRNKSGWALGTLSTGGVSGALLGPMAGGLLADSYGLRPVFFITASVLILCFFVTLFCIREKFQPVSKKEMLHMREVVTSLKNPKLVLSLFVTTLIIQVATGSIAPILTLYVRELAGNVSNVAFISGMIASVPGVAALLSAPRLGKLGDRIGPEKILITALIFSVLLLIPMSYVQTPLQLGILRFLLGAADGALLPAVQTLLVYNSSNQIAGRIFSYNQSFRDIGNVTGPLMGAAISANYGFRAVFLVTAGVVLFNAVYSWNSLRRRRIPQVSN.

A run of 11 helical transmembrane segments spans residues 16-36 (LIVA…VMPF), 58-78 (IVFS…GGLA), 92-112 (LGMG…QFLI), 115-135 (ALLG…ATQV), 146-166 (TLST…GLLA), 173-193 (PVFF…LFCI), 224-244 (LFVT…ILTL), 256-276 (VAFI…LSAP), 290-310 (ILIT…YVQT), 319-339 (FLLG…LVYN), and 378-398 (AVFL…WNSL).

This sequence belongs to the major facilitator superfamily. DHA1 family. MdtG (TC 2.A.1.2.20) subfamily.

Its subcellular location is the cell inner membrane. In terms of biological role, confers resistance to fosfomycin and deoxycholate. The polypeptide is Multidrug resistance protein MdtG (Escherichia coli O139:H28 (strain E24377A / ETEC)).